The following is a 626-amino-acid chain: Methanol dehydrogenase [cytochrome c] subunit 1 (626 aa).

The N-terminal stretch at 1–27 (MSRFVTSVSALAMLALAPAALSSGAYA) is a signal peptide. The cysteines at positions 130 and 131 are disulfide-linked. Residues glutamate 204 and asparagine 288 each coordinate Ca(2+). Aspartate 330 serves as the catalytic Proton acceptor. An intrachain disulfide couples cysteine 413 to cysteine 442.

This sequence belongs to the bacterial PQQ dehydrogenase family. Heterotetramer composed of 2 alpha and 2 beta subunits. Pyrroloquinoline quinone serves as cofactor. Ca(2+) is required as a cofactor.

It is found in the cell inner membrane. The enzyme catalyses 2 Fe(III)-[cytochrome cL] + a primary alcohol = 2 Fe(II)-[cytochrome cL] + an aldehyde + 2 H(+). Catalyzes the oxidation of primary alcohols including methanol. The protein is Methanol dehydrogenase [cytochrome c] subunit 1 (moxF) of Methylorubrum extorquens (strain ATCC 14718 / DSM 1338 / JCM 2805 / NCIMB 9133 / AM1) (Methylobacterium extorquens).